Here is a 144-residue protein sequence, read N- to C-terminus: Nucleoside diphosphate kinase (144 aa).

Residues K9, F57, R85, T91, R102, and N112 each contribute to the ATP site. H115 serves as the catalytic Pros-phosphohistidine intermediate.

The protein belongs to the NDK family. As to quaternary structure, homotetramer. Mg(2+) is required as a cofactor.

The protein resides in the cytoplasm. It carries out the reaction a 2'-deoxyribonucleoside 5'-diphosphate + ATP = a 2'-deoxyribonucleoside 5'-triphosphate + ADP. The catalysed reaction is a ribonucleoside 5'-diphosphate + ATP = a ribonucleoside 5'-triphosphate + ADP. Major role in the synthesis of nucleoside triphosphates other than ATP. The ATP gamma phosphate is transferred to the NDP beta phosphate via a ping-pong mechanism, using a phosphorylated active-site intermediate. The polypeptide is Nucleoside diphosphate kinase (Chlamydia pneumoniae (Chlamydophila pneumoniae)).